We begin with the raw amino-acid sequence, 124 residues long: Quinol oxidase subunit 4 (124 aa).

3 consecutive transmembrane segments (helical) span residues 16–36 (IVGF…AVYT), 44–64 (LWII…MFMH), and 78–98 (TLFG…IFAA).

Belongs to the cytochrome c oxidase bacterial subunit 4 family.

The protein localises to the cell membrane. It catalyses the reaction 2 a quinol + O2 = 2 a quinone + 2 H2O. Catalyzes quinol oxidation with the concomitant reduction of oxygen to water. Major component for energy conversion during vegetative growth. In Bacillus spizizenii (strain ATCC 23059 / NRRL B-14472 / W23) (Bacillus subtilis subsp. spizizenii), this protein is Quinol oxidase subunit 4 (qoxD).